A 1260-amino-acid polypeptide reads, in one-letter code: Phosphatidylinositol 3,4,5-trisphosphate 5-phosphatase 2 (1260 aa).

Positions 25 to 121 constitute an SH2 domain; that stretch reads WYHRDLSRAA…GLVCALLLPV (97 aa). The span at 126–136 shows a compositional bias: basic and acidic residues; that stretch reads ELDPPDERDAS. The segment at 126–178 is disordered; sequence ELDPPDERDASDGEDEKPPLPPRSGTSVSAPLGPSSPPAAPEPPTPAVESAPN. S136 bears the Phosphoserine mark. The segment covering 159 to 171 has biased composition (pro residues); it reads PSSPPAAPEPPTP. S243 and S355 each carry phosphoserine. The residue at position 888 (Y888) is a Phosphotyrosine. S892 carries the post-translational modification Phosphoserine. A disordered region spans residues 899 to 1120; sequence GAKSKAPSVS…FLGEAAGGDD (222 aa). The span at 940 to 952 shows a compositional bias: pro residues; the sequence is PPPTGRPPAPPRA. An SH3-binding motif is present at residues 946-951; the sequence is PPAPPR. The segment covering 953 to 967 has biased composition (basic and acidic residues); it reads APREEPLTPRLKPEG. At T960 the chain carries Phosphothreonine. The NPXY motif motif lies at 985 to 988; sequence NPAY. A Phosphotyrosine modification is found at Y988. 3 stretches are compositionally biased toward pro residues: residues 998–1013, 1050–1061, and 1090–1108; these read LLPP…PVPP, LPPPDFPPPPLP, and LPPP…PLPP. Phosphoserine is present on S1133. Position 1164 is a phosphotyrosine (Y1164). Residues 1181 to 1200 form a disordered region; sequence EDLAEEAPCPQAGRTGGLGE. The 63-residue stretch at 1198 to 1260 folds into the SAM domain; that stretch reads LGEAGMGAWL…LLLDTLQLSK (63 aa). S1259 bears the Phosphoserine mark.

Belongs to the inositol 1,4,5-trisphosphate 5-phosphatase family. In terms of assembly, interacts with tyrosine phosphorylated form of SHC1. Interacts with EGFR. Upon stimulation by the EGF signaling pathway, it forms a complex with SHC1 and EGFR. Interacts with cytoskeletal protein SORBS3/vinexin, promoting its localization to the periphery of cells. Forms a complex with filamin (FLNA or FLNB), actin, GPIb (GP1BA or GP1BB) that regulates cortical and submembraneous actin. Interacts with c-Met/MET, when c-Met/MET is phosphorylated on 'Tyr-1356'. Interacts with p130Cas/BCAR1. Interacts with CENTD3/ARAP3 via its SAM domain. Interacts with c-Cbl/CBL and CAP/SORBS1. Interacts with activated EPHA2 receptor. Interacts with receptor FCGR2A. Interacts with receptor FCGR2B. Interacts with tyrosine kinase ABL1. Interacts with tyrosine kinase TEC. Interacts with CSF1R. Interacts (via N-terminus) with SH3YL1 (via SH3 domain). Interacts with FCRL6 (tyrosine phosphorylated form). Interacts (via SH2 domain) with tyrosine phosphorylated KLRC1 (via ITIM). Interacts with NEDD9/HEF1. Post-translationally, tyrosine phosphorylated by the members of the SRC family after exposure to a diverse array of extracellular stimuli such as insulin, growth factors such as EGF or PDGF, chemokines, integrin ligands and hypertonic and oxidative stress. May be phosphorylated upon IgG receptor FCGR2B-binding. Phosphorylated at Tyr-988 following cell attachment and spreading. Phosphorylated at Tyr-1164 following EGF signaling pathway stimulation. In terms of tissue distribution, expressed abundantly in skeletal muscle tissue.

Its subcellular location is the cytoplasm. The protein resides in the cytosol. It localises to the cytoskeleton. The protein localises to the membrane. It is found in the cell projection. Its subcellular location is the filopodium. The protein resides in the lamellipodium. It localises to the basal cell membrane. The protein localises to the nucleus. It is found in the nucleus speckle. Its subcellular location is the spindle pole. The catalysed reaction is a 1,2-diacyl-sn-glycero-3-phospho-(1D-myo-inositol-3,4,5-trisphosphate) + H2O = a 1,2-diacyl-sn-glycero-3-phospho-(1D-myo-inositol-3,4-bisphosphate) + phosphate. It carries out the reaction 1,2-dioctanoyl-sn-glycero-3-phospho-(1D-myo-inositol-3,4,5-trisphosphate) + H2O = 1,2-dioctanoyl-sn-glycero-3-phospho-(1D-myo-inositol-3,4-bisphosphate) + phosphate. It catalyses the reaction 1,2-dihexadecanoyl-sn-glycero-3-phospho-(1D-myo-inositol-3,4,5-trisphosphate) + H2O = 1,2-dihexadecanoyl-sn-glycero-3-phospho-(1D-myo-inositol-3,4-bisphosphate) + phosphate. With respect to regulation, activated upon translocation to the sites of synthesis of PtdIns(3,4,5)P3 in the membrane. Enzymatic activity is enhanced in the presence of phosphatidylserine. In terms of biological role, phosphatidylinositol (PtdIns) phosphatase that specifically hydrolyzes the 5-phosphate of phosphatidylinositol-3,4,5-trisphosphate (PtdIns(3,4,5)P3) to produce PtdIns(3,4)P2, thereby negatively regulating the PI3K (phosphoinositide 3-kinase) pathways. Required for correct mitotic spindle orientation and therefore progression of mitosis. Plays a central role in regulation of PI3K-dependent insulin signaling, although the precise molecular mechanisms and signaling pathways remain unclear. While overexpression reduces both insulin-stimulated MAP kinase and Akt activation, its absence does not affect insulin signaling or GLUT4 trafficking. Confers resistance to dietary obesity. May act by regulating AKT2, but not AKT1, phosphorylation at the plasma membrane. Part of a signaling pathway that regulates actin cytoskeleton remodeling. Required for the maintenance and dynamic remodeling of actin structures as well as in endocytosis, having a major impact on ligand-induced EGFR internalization and degradation. Participates in regulation of cortical and submembraneous actin by hydrolyzing PtdIns(3,4,5)P3 thereby regulating membrane ruffling. Regulates cell adhesion and cell spreading. Required for HGF-mediated lamellipodium formation, cell scattering and spreading. Acts as a negative regulator of EPHA2 receptor endocytosis by inhibiting via PI3K-dependent Rac1 activation. Acts as a regulator of neuritogenesis by regulating PtdIns(3,4,5)P3 level and is required to form an initial protrusive pattern, and later, maintain proper neurite outgrowth. Acts as a negative regulator of the FC-gamma-RIIA receptor (FCGR2A). Mediates signaling from the FC-gamma-RIIB receptor (FCGR2B), playing a central role in terminating signal transduction from activating immune/hematopoietic cell receptor systems. Involved in EGF signaling pathway. Upon stimulation by EGF, it is recruited by EGFR and dephosphorylates PtdIns(3,4,5)P3. Plays a negative role in regulating the PI3K-PKB pathway, possibly by inhibiting PKB activity. Down-regulates Fc-gamma-R-mediated phagocytosis in macrophages independently of INPP5D/SHIP1. In macrophages, down-regulates NF-kappa-B-dependent gene transcription by regulating macrophage colony-stimulating factor (M-CSF)-induced signaling. Plays a role in the localization of AURKA and NEDD9/HEF1 to the basolateral membrane at interphase in polarized cysts, thereby mediates cell cycle homeostasis, cell polarization and cilia assembly. Additionally promotion of cilia growth is also facilitated by hydrolysis of (PtdIns(3,4,5)P3) to PtdIns(3,4)P2. Promotes formation of apical membrane-initiation sites during the initial stages of lumen formation via Rho family-induced actin filament organization and CTNNB1 localization to cell-cell contacts. May also hydrolyze PtdIns(1,3,4,5)P4, and could thus affect the levels of the higher inositol polyphosphates like InsP6. Involved in endochondral ossification. This Sus scrofa (Pig) protein is Phosphatidylinositol 3,4,5-trisphosphate 5-phosphatase 2.